Reading from the N-terminus, the 270-residue chain is Methionine-rich protein (270 aa).

Residues 1 to 18 (MLSLWAIGLLGLLNQVEA) form the signal peptide. A compositionally biased stretch (polar residues) spans 31 to 52 (QRSAQFSSSGWGTSPAAQNPWS). The segment at 31–95 (QRSAQFSSSG…MPGSMPGAMP (65 aa)) is disordered. Positions 56–95 (PMPNTNMPNMNTGSLPGSMPGAMPGSMPGAMPGSMPGAMP) are enriched in low complexity.

Component of the acid-soluble organic matrix of calcified layers of the shell (at protein level).

The protein localises to the secreted. This Lottia gigantea (Giant owl limpet) protein is Methionine-rich protein.